Here is a 285-residue protein sequence, read N- to C-terminus: Probable endonuclease 4 (285 aa).

Zn(2+) is bound by residues His69, His109, Glu145, Asp179, His182, His216, Asp229, His231, and Glu261.

Belongs to the AP endonuclease 2 family. Requires Zn(2+) as cofactor.

The enzyme catalyses Endonucleolytic cleavage to 5'-phosphooligonucleotide end-products.. Endonuclease IV plays a role in DNA repair. It cleaves phosphodiester bonds at apurinic or apyrimidinic (AP) sites, generating a 3'-hydroxyl group and a 5'-terminal sugar phosphate. This chain is Probable endonuclease 4, found in Salmonella paratyphi C (strain RKS4594).